The chain runs to 578 residues: Protein SIA1 (578 aa).

The first 28 residues, 1–28 (MFRNRRILLYARRFFLVWICFLFITSWS), serve as a signal peptide directing secretion.

Functionally, may be involved in the activation of the plasma membrane proton-ATPase by glucose. This chain is Protein SIA1 (SIA1), found in Kluyveromyces lactis (strain ATCC 8585 / CBS 2359 / DSM 70799 / NBRC 1267 / NRRL Y-1140 / WM37) (Yeast).